A 239-amino-acid polypeptide reads, in one-letter code: 1-(5-phosphoribosyl)-5-[(5-phosphoribosylamino)methylideneamino] imidazole-4-carboxamide isomerase (239 aa).

D8 serves as the catalytic Proton acceptor. The Proton donor role is filled by D130.

It belongs to the HisA/HisF family.

It localises to the cytoplasm. It catalyses the reaction 1-(5-phospho-beta-D-ribosyl)-5-[(5-phospho-beta-D-ribosylamino)methylideneamino]imidazole-4-carboxamide = 5-[(5-phospho-1-deoxy-D-ribulos-1-ylimino)methylamino]-1-(5-phospho-beta-D-ribosyl)imidazole-4-carboxamide. It participates in amino-acid biosynthesis; L-histidine biosynthesis; L-histidine from 5-phospho-alpha-D-ribose 1-diphosphate: step 4/9. The chain is 1-(5-phosphoribosyl)-5-[(5-phosphoribosylamino)methylideneamino] imidazole-4-carboxamide isomerase from Lachnoclostridium phytofermentans (strain ATCC 700394 / DSM 18823 / ISDg) (Clostridium phytofermentans).